The sequence spans 206 residues: dTTP/UTP pyrophosphatase (206 aa).

The Proton acceptor role is filled by Asp79.

The protein belongs to the Maf family. YhdE subfamily. The cofactor is a divalent metal cation.

The protein resides in the cytoplasm. It carries out the reaction dTTP + H2O = dTMP + diphosphate + H(+). The catalysed reaction is UTP + H2O = UMP + diphosphate + H(+). Functionally, nucleoside triphosphate pyrophosphatase that hydrolyzes dTTP and UTP. May have a dual role in cell division arrest and in preventing the incorporation of modified nucleotides into cellular nucleic acids. This is dTTP/UTP pyrophosphatase from Rhizobium johnstonii (strain DSM 114642 / LMG 32736 / 3841) (Rhizobium leguminosarum bv. viciae).